Consider the following 258-residue polypeptide: Deoxyribose-phosphate aldolase (258 aa).

The active-site Proton donor/acceptor is the Asp-101. Residue Lys-166 is the Schiff-base intermediate with acetaldehyde of the active site. Catalysis depends on Lys-200, which acts as the Proton donor/acceptor.

It belongs to the DeoC/FbaB aldolase family. DeoC type 2 subfamily.

It localises to the cytoplasm. The enzyme catalyses 2-deoxy-D-ribose 5-phosphate = D-glyceraldehyde 3-phosphate + acetaldehyde. It functions in the pathway carbohydrate degradation; 2-deoxy-D-ribose 1-phosphate degradation; D-glyceraldehyde 3-phosphate and acetaldehyde from 2-deoxy-alpha-D-ribose 1-phosphate: step 2/2. In terms of biological role, catalyzes a reversible aldol reaction between acetaldehyde and D-glyceraldehyde 3-phosphate to generate 2-deoxy-D-ribose 5-phosphate. The sequence is that of Deoxyribose-phosphate aldolase from Haemophilus ducreyi (strain 35000HP / ATCC 700724).